A 200-amino-acid chain; its full sequence is Small ribosomal subunit protein uS4 (200 aa).

Residues 21 to 42 form a disordered region; that stretch reads GTGKELQKRPYPPGQHGPGQRR. One can recognise an S4 RNA-binding domain in the interval 92–155; that stretch reads SRLDNLVYRL…RNLQVIKEAI (64 aa).

The protein belongs to the universal ribosomal protein uS4 family. In terms of assembly, part of the 30S ribosomal subunit. Contacts protein S5. The interaction surface between S4 and S5 is involved in control of translational fidelity.

Its function is as follows. One of the primary rRNA binding proteins, it binds directly to 16S rRNA where it nucleates assembly of the body of the 30S subunit. Functionally, with S5 and S12 plays an important role in translational accuracy. The polypeptide is Small ribosomal subunit protein uS4 (Geobacillus thermodenitrificans (strain NG80-2)).